The chain runs to 161 residues: Nucleotide-binding protein Daci_4781 (161 aa).

This sequence belongs to the YajQ family.

In terms of biological role, nucleotide-binding protein. This is Nucleotide-binding protein Daci_4781 from Delftia acidovorans (strain DSM 14801 / SPH-1).